Here is a 248-residue protein sequence, read N- to C-terminus: ATP synthase subunit a, chloroplastic (248 aa).

The next 5 membrane-spanning stretches (helical) occupy residues 38-58 (QVLI…TIAV), 96-116 (VPFI…GALL), 135-155 (INTT…AGLA), 200-220 (LVVA…VMFL), and 221-241 (GLFT…AYIG).

The protein belongs to the ATPase A chain family. As to quaternary structure, F-type ATPases have 2 components, CF(1) - the catalytic core - and CF(0) - the membrane proton channel. CF(1) has five subunits: alpha(3), beta(3), gamma(1), delta(1), epsilon(1). CF(0) has four main subunits: a, b, b' and c.

The protein localises to the plastid. It localises to the chloroplast thylakoid membrane. In terms of biological role, key component of the proton channel; it plays a direct role in the translocation of protons across the membrane. The sequence is that of ATP synthase subunit a, chloroplastic from Pinus koraiensis (Korean pine).